The primary structure comprises 173 residues: Lipoprotein signal peptidase (173 aa).

3 helical membrane-spanning segments follow: residues 12-32 (WLWL…WTIQ), 67-87 (WQRY…VYLL), and 102-122 (ALIL…GYVI). Active-site residues include D123 and D141. The helical transmembrane segment at 137–157 (FNIADSAIFTGAVIMIFESFF) threads the bilayer.

This sequence belongs to the peptidase A8 family.

The protein localises to the cell inner membrane. It catalyses the reaction Release of signal peptides from bacterial membrane prolipoproteins. Hydrolyzes -Xaa-Yaa-Zaa-|-(S,diacylglyceryl)Cys-, in which Xaa is hydrophobic (preferably Leu), and Yaa (Ala or Ser) and Zaa (Gly or Ala) have small, neutral side chains.. Its pathway is protein modification; lipoprotein biosynthesis (signal peptide cleavage). Its function is as follows. This protein specifically catalyzes the removal of signal peptides from prolipoproteins. The chain is Lipoprotein signal peptidase from Psychromonas ingrahamii (strain DSM 17664 / CCUG 51855 / 37).